The chain runs to 410 residues: MTMISDLSKDLVEEILSKAPITSLGAVRSTHKQWNALSKGRLLYKAEAKDQFLGFMVMDHRFLSMIFHLNGILKGDGEGFDRPSIREVGDIVNQIDISKVFQCDGLVLCVPSDNSSVVVWNPYLGQTKWIEAREPHDESDMFALGYDKDKNHKILRLYDECYYYYEVYNFKTESWGEEDHLPGWDIDSYNRGVSLNGNTYFLTQEQRAKDKYRVFLLCFNFTTEKFENFIAMPFKYHRKYVGTLSCVGNEKLAALYQRWDTGEMAIWVTTKIESNEVLWSNLFKVDMKPLVRFGFQQCKDEAGSFFIDEEKKLAVVFNLDKKRGKRNNKTRCYHTAYIIGEKGYLKKEVLGEAVEVRKDVYRSALVCSSSYVPSLEKINQIEEEEEDKCKSIKMVDTKRQRKKRKRKSKR.

In terms of domain architecture, F-box spans 2–49 (TMISDLSKDLVEEILSKAPITSLGAVRSTHKQWNALSKGRLLYKAEAK). Residues 386-410 (EDKCKSIKMVDTKRQRKKRKRKSKR) form a disordered region. The segment covering 387–398 (DKCKSIKMVDTK) has biased composition (basic and acidic residues). Positions 399–410 (RQRKKRKRKSKR) are enriched in basic residues.

This is F-box protein At3g19890 from Arabidopsis thaliana (Mouse-ear cress).